A 203-amino-acid polypeptide reads, in one-letter code: Ribosomal RNA large subunit methyltransferase E (203 aa).

The S-adenosyl-L-methionine site is built by glycine 51, tryptophan 53, aspartate 69, aspartate 85, and aspartate 108. The active-site Proton acceptor is the lysine 148.

Belongs to the class I-like SAM-binding methyltransferase superfamily. RNA methyltransferase RlmE family.

It is found in the cytoplasm. The enzyme catalyses uridine(2552) in 23S rRNA + S-adenosyl-L-methionine = 2'-O-methyluridine(2552) in 23S rRNA + S-adenosyl-L-homocysteine + H(+). Functionally, specifically methylates the uridine in position 2552 of 23S rRNA at the 2'-O position of the ribose in the fully assembled 50S ribosomal subunit. This chain is Ribosomal RNA large subunit methyltransferase E, found in Methanosphaerula palustris (strain ATCC BAA-1556 / DSM 19958 / E1-9c).